The chain runs to 260 residues: 3'-5' ssDNA/RNA exonuclease TatD (260 aa).

3 residues coordinate a divalent metal cation: E92, H128, and H153.

The protein belongs to the metallo-dependent hydrolases superfamily. TatD-type hydrolase family. TatD subfamily. As to quaternary structure, monomer. It depends on Mg(2+) as a cofactor.

It is found in the cytoplasm. Functionally, 3'-5' exonuclease that prefers single-stranded DNA and RNA. May play a role in the H(2)O(2)-induced DNA damage repair. This is 3'-5' ssDNA/RNA exonuclease TatD from Pectobacterium carotovorum subsp. carotovorum (strain PC1).